The sequence spans 194 residues: Protein DROOPING LEAF (194 aa).

The C4-type zinc finger occupies 15–42 (CTYCNTVLAVGVPCKRLMDTVTVKCGHC). The segment at 83 to 103 (LVSPTSNEGSPRAPFVVKPPE) is disordered.

It belongs to the YABBY family.

Its subcellular location is the nucleus. Regulates carpel specification in flower development. Severe or intermediate mutation in DL causes complete or partial homeotic conversion of carpels into stamens without affecting the identities of other floral organs. Interacts antagonistically with class B genes and controls floral meristem determinacy. Regulates midrib formation in leaves probably by inducing cell proliferation in the central region of the leaf. This is Protein DROOPING LEAF (DL) from Oryza sativa subsp. japonica (Rice).